Here is a 920-residue protein sequence, read N- to C-terminus: Nitrate reductase [NADH] (920 aa).

The interval 1 to 69 is disordered; that stretch reads MAASVENRQF…DTSDDEEDEA (69 aa). A compositionally biased stretch (acidic residues) spans 60–69; the sequence is DTSDDEEDEA. Cys-185 lines the Mo-molybdopterin pocket. In terms of domain architecture, Cytochrome b5 heme-binding spans 534 to 609; it reads SLTFTMSEVK…LEEYRVGELI (76 aa). His-569 and His-592 together coordinate heme. The region spanning 663–775 is the FAD-binding FR-type domain; sequence REKIPCKLIS…KGPLGHIEYM (113 aa). FAD-binding positions include 715-718, 732-736, Phe-737, Phe-744, 749-751, and Thr-802; these read RAYT, LVKIY, and LMS.

Belongs to the nitrate reductase family. As to quaternary structure, homodimer. Requires FAD as cofactor. It depends on heme as a cofactor. The cofactor is Mo-molybdopterin. In cortical cells of roots grown at low nitrate concentrations, in vascular tissues of roots at high nitrate concentrations and in root apex under both conditions.

The catalysed reaction is nitrite + NAD(+) + H2O = nitrate + NADH + H(+). Nitrate reductase is a key enzyme involved in the first step of nitrate assimilation in plants, fungi and bacteria. This chain is Nitrate reductase [NADH] (NIA), found in Cichorium intybus (Chicory).